A 397-amino-acid polypeptide reads, in one-letter code: Imidazolonepropionase (397 aa).

Fe(3+) contacts are provided by His66 and His68. Positions 66 and 68 each coordinate Zn(2+). The 4-imidazolone-5-propanoate site is built by Arg75, Tyr138, and His171. Residue Tyr138 coordinates N-formimidoyl-L-glutamate. His236 is a Fe(3+) binding site. His236 contacts Zn(2+). Gln239 contributes to the 4-imidazolone-5-propanoate binding site. Asp311 provides a ligand contact to Fe(3+). A Zn(2+)-binding site is contributed by Asp311. N-formimidoyl-L-glutamate contacts are provided by Asn313 and Gly315. Position 316 (Ser316) interacts with 4-imidazolone-5-propanoate.

This sequence belongs to the metallo-dependent hydrolases superfamily. HutI family. Requires Zn(2+) as cofactor. It depends on Fe(3+) as a cofactor.

The protein resides in the cytoplasm. The enzyme catalyses 4-imidazolone-5-propanoate + H2O = N-formimidoyl-L-glutamate. It functions in the pathway amino-acid degradation; L-histidine degradation into L-glutamate; N-formimidoyl-L-glutamate from L-histidine: step 3/3. Functionally, catalyzes the hydrolytic cleavage of the carbon-nitrogen bond in imidazolone-5-propanoate to yield N-formimidoyl-L-glutamate. It is the third step in the universal histidine degradation pathway. In Roseobacter denitrificans (strain ATCC 33942 / OCh 114) (Erythrobacter sp. (strain OCh 114)), this protein is Imidazolonepropionase.